A 76-amino-acid polypeptide reads, in one-letter code: UPF0291 protein GWCH70_1239 (76 aa).

The segment at 54–76 (VIDPNGNDVTPKKLKESQKSRLH) is disordered. Positions 63–76 (TPKKLKESQKSRLH) are enriched in basic and acidic residues.

The protein belongs to the UPF0291 family.

It is found in the cytoplasm. The polypeptide is UPF0291 protein GWCH70_1239 (Geobacillus sp. (strain WCH70)).